A 203-amino-acid chain; its full sequence is NAD(P)H-quinone oxidoreductase subunit I (203 aa).

2 consecutive 4Fe-4S ferredoxin-type domains span residues 55 to 84 (GRIH…VDWE) and 95 to 124 (KHYS…MTEE). Positions 64, 67, 70, 74, 104, 107, 110, and 114 each coordinate [4Fe-4S] cluster.

The protein belongs to the complex I 23 kDa subunit family. As to quaternary structure, NDH-1 is composed of at least 11 different subunits. It depends on [4Fe-4S] cluster as a cofactor.

It is found in the cellular thylakoid membrane. It carries out the reaction a plastoquinone + NADH + (n+1) H(+)(in) = a plastoquinol + NAD(+) + n H(+)(out). It catalyses the reaction a plastoquinone + NADPH + (n+1) H(+)(in) = a plastoquinol + NADP(+) + n H(+)(out). In terms of biological role, NDH-1 shuttles electrons from an unknown electron donor, via FMN and iron-sulfur (Fe-S) centers, to quinones in the respiratory and/or the photosynthetic chain. The immediate electron acceptor for the enzyme in this species is believed to be plastoquinone. Couples the redox reaction to proton translocation, and thus conserves the redox energy in a proton gradient. The sequence is that of NAD(P)H-quinone oxidoreductase subunit I (ndhI) from Picosynechococcus sp. (strain ATCC 27264 / PCC 7002 / PR-6) (Agmenellum quadruplicatum).